Here is a 240-residue protein sequence, read N- to C-terminus: 1-(5-phosphoribosyl)-5-[(5-phosphoribosylamino)methylideneamino] imidazole-4-carboxamide isomerase (240 aa).

The active-site Proton acceptor is the aspartate 8. Catalysis depends on aspartate 129, which acts as the Proton donor.

It belongs to the HisA/HisF family.

The protein resides in the cytoplasm. It carries out the reaction 1-(5-phospho-beta-D-ribosyl)-5-[(5-phospho-beta-D-ribosylamino)methylideneamino]imidazole-4-carboxamide = 5-[(5-phospho-1-deoxy-D-ribulos-1-ylimino)methylamino]-1-(5-phospho-beta-D-ribosyl)imidazole-4-carboxamide. It functions in the pathway amino-acid biosynthesis; L-histidine biosynthesis; L-histidine from 5-phospho-alpha-D-ribose 1-diphosphate: step 4/9. This Listeria monocytogenes serotype 4b (strain F2365) protein is 1-(5-phosphoribosyl)-5-[(5-phosphoribosylamino)methylideneamino] imidazole-4-carboxamide isomerase.